A 554-amino-acid polypeptide reads, in one-letter code: 3-(3-hydroxy-phenyl)propionate/3-hydroxycinnamic acid hydroxylase (554 aa).

FAD-binding positions include 17 to 46 (QVAI…VVEK) and 285 to 295 (FRIDRVLLAGD).

Belongs to the PheA/TfdB FAD monooxygenase family. Requires FAD as cofactor.

It catalyses the reaction 3-(3-hydroxyphenyl)propanoate + NADH + O2 + H(+) = 3-(2,3-dihydroxyphenyl)propanoate + NAD(+) + H2O. The enzyme catalyses (2E)-3-(3-hydroxyphenyl)prop-2-enoate + NADH + O2 + H(+) = (2E)-3-(2,3-dihydroxyphenyl)prop-2-enoate + NAD(+) + H2O. Its pathway is aromatic compound metabolism; 3-phenylpropanoate degradation. Catalyzes the insertion of one atom of molecular oxygen into position 2 of the phenyl ring of 3-(3-hydroxyphenyl)propionate (3-HPP) and hydroxycinnamic acid (3HCI). This Escherichia coli (strain 55989 / EAEC) protein is 3-(3-hydroxy-phenyl)propionate/3-hydroxycinnamic acid hydroxylase.